The chain runs to 205 residues: Spermatogenesis-associated protein 24 (205 aa).

The stretch at 17 to 167 (LAFDQLRDVI…QKQNFRNHIS (151 aa)) forms a coiled coil. Residues 138–185 (EDILNGKENEIKELQQVISQQKQNFRNHISDFRIQKQQETYMAQVLDQ) are required for interaction with CBX5 and TBPL1. Residues 185–205 (QKRKKATGMRRARSRQCSREK) are disordered. Residues 186 to 205 (KRKKATGMRRARSRQCSREK) are compositionally biased toward basic residues.

Belongs to the SPATA24 family. Homodimer. Interacts with CBX3, CBX5, GMNN, GTF2B, TBPL1 and the polycomb proteins PHCF2, RNF2 and SCMH1 but not with CBX1 or PCGF2. As to expression, testis-specific (at protein level).

The protein localises to the cytoplasm. The protein resides in the nucleus. It is found in the nucleolus. Its subcellular location is the nucleoplasm. Functionally, binds DNA with high affinity but does not bind to TATA boxes. Synergises with GMNN and TBP in activation of TATA box-containing promoters and with GMNN and TBPL1 in activation of the NF1 TATA-less promoter. May play a role in cytoplasm movement and removal during spermiogenesis. The protein is Spermatogenesis-associated protein 24 (Spata24) of Mus musculus (Mouse).